The primary structure comprises 202 residues: Glycerol-3-phosphate acyltransferase (202 aa).

A run of 4 helical transmembrane segments spans residues 1 to 21 (MTLIALILPAYLLGSISFGVL), 84 to 104 (AVAAAALGVFLGHLFPVFLHF), 116 to 136 (ILLGFNPWMGLLAATIWLAVA), and 143 to 163 (SLAAIVAASLAPFYALFFLGF).

The protein belongs to the PlsY family. In terms of assembly, probably interacts with PlsX.

It localises to the cell inner membrane. It catalyses the reaction an acyl phosphate + sn-glycerol 3-phosphate = a 1-acyl-sn-glycero-3-phosphate + phosphate. Its pathway is lipid metabolism; phospholipid metabolism. Catalyzes the transfer of an acyl group from acyl-phosphate (acyl-PO(4)) to glycerol-3-phosphate (G3P) to form lysophosphatidic acid (LPA). This enzyme utilizes acyl-phosphate as fatty acyl donor, but not acyl-CoA or acyl-ACP. The sequence is that of Glycerol-3-phosphate acyltransferase from Nitrosospira multiformis (strain ATCC 25196 / NCIMB 11849 / C 71).